The sequence spans 1217 residues: ATP-dependent helicase/nuclease subunit A (1217 aa).

A UvrD-like helicase ATP-binding domain is found at 10–475 (VIWTDAQWQS…IDLSQNFRSR (466 aa)). 31–38 (AAAGSGKT) contributes to the ATP binding site. The UvrD-like helicase C-terminal domain maps to 476–786 (KEVLSTTNYI…RMMTIHSSKG (311 aa)).

It belongs to the helicase family. AddA subfamily. In terms of assembly, heterodimer of AddA and AddB/RexB. It depends on Mg(2+) as a cofactor.

It catalyses the reaction Couples ATP hydrolysis with the unwinding of duplex DNA by translocating in the 3'-5' direction.. The catalysed reaction is ATP + H2O = ADP + phosphate + H(+). The heterodimer acts as both an ATP-dependent DNA helicase and an ATP-dependent, dual-direction single-stranded exonuclease. Recognizes the chi site generating a DNA molecule suitable for the initiation of homologous recombination. The AddA nuclease domain is required for chi fragment generation; this subunit has the helicase and 3' -&gt; 5' nuclease activities. The sequence is that of ATP-dependent helicase/nuclease subunit A from Staphylococcus aureus (strain Mu3 / ATCC 700698).